The primary structure comprises 673 residues: Zinc finger and BTB domain-containing protein 16 (673 aa).

In terms of domain architecture, BTB spans 34-96; the sequence is CDVVIMVDSQ…AYTATLQAKA (63 aa). Residues serine 76, serine 184, and serine 197 each carry the phosphoserine; by PDPK1 modification. The tract at residues 200–300 is interaction with RUNX1T1; the sequence is KAAVDSLMTI…SARELHYGRE (101 aa). Disordered regions lie at residues 215–236 and 249–332; these read QGTL…GRHP and DEVP…KHLG. Serine 256 bears the Phosphoserine; by PDPK1 mark. Residue threonine 282 is modified to Phosphothreonine; by PDPK1. Basic and acidic residues-rich tracts occupy residues 293–302 and 319–331; these read RELHYGREES and RPEH…EKHL. C2H2-type zinc fingers lie at residues 404 to 426, 432 to 454, 461 to 483, 490 to 512, 518 to 540, 546 to 568, 574 to 596, and 602 to 624; these read EQCS…RKLH, YGCE…LLAH, FVCD…RQTH, VFCL…MEVH, YICS…LRSH, YECE…KRIH, YECN…YRVH, and FECK…LRTH. Serine 628 carries the post-translational modification Phosphoserine; by PDPK1. Residues 630 to 652 form a C2H2-type 9 zinc finger; the sequence is YQCTICTEYCPSLSSMQKHMKGH.

Belongs to the krueppel C2H2-type zinc-finger protein family. As to quaternary structure, binds EPN1. Interacts with ZBTB32 and CUL3. Interacts with ATP7B. Interacts with transcriptional corepressor RUNX1T1 (via its N-terminus); the interaction increases the transcription repression activity of ZBTB16. Interacts (via C2H2-type zinc finger domains 1 and 2) with RNF112. In terms of tissue distribution, within the hematopoietic system, PLZF is expressed in bone marrow, early myeloid cell lines and peripheral blood mononuclear cells. Also expressed in the ovary, and at lower levels, in the kidney and lung.

The protein resides in the nucleus. Its subcellular location is the nuclear body. The protein operates within protein modification; protein ubiquitination. Functionally, acts as a transcriptional repressor. Transcriptional repression may be mediated through recruitment of histone deacetylases to target promoters. May play a role in myeloid maturation and in the development and/or maintenance of other differentiated tissues. Probable substrate-recognition component of an E3 ubiquitin-protein ligase complex which mediates the ubiquitination and subsequent proteasomal degradation of target proteins. The polypeptide is Zinc finger and BTB domain-containing protein 16 (ZBTB16) (Homo sapiens (Human)).